Consider the following 718-residue polypeptide: Nucleolar protein 11 (718 aa).

N6-methyllysine is present on lysine 346.

As to quaternary structure, interacts with UTP4. Interacts with FBL/fibrillarin in a transcription-dependent manner. May associate with the proposed t-UTP subcomplex of the SSU processome containing at least UTP4, WDR43, HEATR1, UTP15, WDR75.

Its subcellular location is the nucleus. The protein localises to the nucleolus. Ribosome biogenesis factor. May be required for both optimal rDNA transcription and small subunit (SSU) pre-rRNA processing at sites A', A0, 1 and 2b. This is Nucleolar protein 11 (NOL11) from Bos taurus (Bovine).